The sequence spans 160 residues: Lipoprotein signal peptidase (160 aa).

The next 3 membrane-spanning stretches (helical) occupy residues 13-33, 72-92, and 104-124; these read IYITTIIFILILDISSKHLII, WFLSTVSILTILVMTRIITKL, and SLIIAGATGNLIDRIFYGFVV. Catalysis depends on residues aspartate 125 and aspartate 143. The helical transmembrane segment at 134 to 154 threads the bilayer; that stretch reads WHFATFNIADCSIFIGIIILM.

It belongs to the peptidase A8 family.

The protein resides in the cell inner membrane. It catalyses the reaction Release of signal peptides from bacterial membrane prolipoproteins. Hydrolyzes -Xaa-Yaa-Zaa-|-(S,diacylglyceryl)Cys-, in which Xaa is hydrophobic (preferably Leu), and Yaa (Ala or Ser) and Zaa (Gly or Ala) have small, neutral side chains.. The protein operates within protein modification; lipoprotein biosynthesis (signal peptide cleavage). In terms of biological role, this protein specifically catalyzes the removal of signal peptides from prolipoproteins. The chain is Lipoprotein signal peptidase from Buchnera aphidicola subsp. Acyrthosiphon pisum (strain Tuc7).